The primary structure comprises 303 residues: Probable aspartoacylase (303 aa).

Zn(2+) is bound by residues H13 and E16. Residues R55 and 62 to 63 contribute to the substrate site; that span reads NR. Zn(2+) is bound at residue H104. 2 residues coordinate substrate: E162 and Y273.

It belongs to the AspA/AstE family. Aspartoacylase subfamily. It depends on Zn(2+) as a cofactor.

The enzyme catalyses an N-acyl-L-aspartate + H2O = a carboxylate + L-aspartate. The chain is Probable aspartoacylase from Parasynechococcus marenigrum (strain WH8102).